Reading from the N-terminus, the 218-residue chain is N-(5'-phosphoribosyl)anthranilate isomerase (218 aa).

The protein belongs to the TrpF family.

The catalysed reaction is N-(5-phospho-beta-D-ribosyl)anthranilate = 1-(2-carboxyphenylamino)-1-deoxy-D-ribulose 5-phosphate. The protein operates within amino-acid biosynthesis; L-tryptophan biosynthesis; L-tryptophan from chorismate: step 3/5. The protein is N-(5'-phosphoribosyl)anthranilate isomerase of Bacillus licheniformis (strain ATCC 14580 / DSM 13 / JCM 2505 / CCUG 7422 / NBRC 12200 / NCIMB 9375 / NCTC 10341 / NRRL NRS-1264 / Gibson 46).